The primary structure comprises 458 residues: Repulsive guidance molecule A (458 aa).

The signal sequence occupies residues 1-53; sequence MGGPGPRRAGTSRERLVVTGRAGWMGMGRGAGRSALGFWPTLAFLLCSFPAAT. The propeptide at 54-176 is removed in mature form; sequence SPCKILKCNS…NYTHCGLFGD (123 aa). Residues 121 to 133 show a composition bias toward polar residues; sequence HNCSKDGPTSQPR. Residues 121–149 form a disordered region; it reads HNCSKDGPTSQPRLHTLPPAGDSQERSDS. Residues Asn-122 and Asn-167 are each glycosylated (N-linked (GlcNAc...) asparagine). Cystine bridges form between Cys-153/Cys-234 and Cys-171/Cys-323. N-linked (GlcNAc...) asparagine glycosylation occurs at Asn-397. A lipid anchor (GPI-anchor amidated alanine) is attached at Ala-433. Positions 434–458 are cleaved as a propeptide — removed in mature form; the sequence is AGLPLAPQPLLGALILLLALFPVFC.

Belongs to the repulsive guidance molecule (RGM) family. In terms of assembly, interacts with NEO1, BMP2 and BMP4. Post-translationally, autocatalytically cleaved at low pH; the two chains remain linked via two disulfide bonds.

Its subcellular location is the cell membrane. Functionally, member of the repulsive guidance molecule (RGM) family that performs several functions in the developing and adult nervous system. Regulates cephalic neural tube closure, inhibits neurite outgrowth and cortical neuron branching, and the formation of mature synapses. Binding to its receptor NEO1/neogenin induces activation of RHOA-ROCK1/Rho-kinase signaling pathway through UNC5B-ARHGEF12/LARG-PTK2/FAK1 cascade, leading to collapse of the neuronal growth cone and neurite outgrowth inhibition. Furthermore, RGMA binding to NEO1/neogenin leads to HRAS inactivation by influencing HRAS-PTK2/FAK1-AKT1 pathway. It also functions as a bone morphogenetic protein (BMP) coreceptor that may signal through SMAD1, SMAD5, and SMAD8. The protein is Repulsive guidance molecule A (RGMA) of Macaca fascicularis (Crab-eating macaque).